A 634-amino-acid chain; its full sequence is Nicotinic receptor-associated protein 1 (634 aa).

2 consecutive C2 domains span residues 1 to 141 (MNQP…KAHL) and 159 to 295 (KTGS…EILL). Ca(2+) contacts are provided by Leu-29, Asp-30, Asp-36, Asp-105, Asp-107, Asp-119, Asp-189, Asp-195, Asp-251, Asp-253, and Asp-271. The VWFA domain maps to 338–557 (DFAVAVDFTA…LDPDVIQENL (220 aa)). The segment at 576–603 (RGFQPRPVDDPWRRDSPPPEFDPILDGT) is disordered. Residues 582–592 (PVDDPWRRDSP) are compositionally biased toward basic and acidic residues.

Belongs to the copine family. In terms of assembly, interacts with nicotinic acetylcholine receptor. The cofactor is Ca(2+). Expressed in head and tail neurons, ventral cord moto-neurons, body wall muscles and hypodermal cells of the vulva.

The protein resides in the cell membrane. Exhibits calcium-dependent phospholipid binding properties. May function in membrane trafficking. Regulates synaptic levels of nicotinic acetylcholine receptor subunit lev-1 and unc-38 in the nerve cord. Involved in nicotinic acetylcholine receptor (nAChR)-mediated sensitivity to nicotine and levamisole. Affects directional sperm motility. The chain is Nicotinic receptor-associated protein 1 (nra-1) from Caenorhabditis elegans.